The following is a 128-amino-acid chain: Aspartate 1-decarboxylase (128 aa).

Serine 25 functions as the Schiff-base intermediate with substrate; via pyruvic acid in the catalytic mechanism. Pyruvic acid (Ser) is present on serine 25. Threonine 57 lines the substrate pocket. The active-site Proton donor is the tyrosine 58. Substrate is bound at residue 73–75; that stretch reads GSA.

This sequence belongs to the PanD family. Heterooctamer of four alpha and four beta subunits. The cofactor is pyruvate. Post-translationally, is synthesized initially as an inactive proenzyme, which is activated by self-cleavage at a specific serine bond to produce a beta-subunit with a hydroxyl group at its C-terminus and an alpha-subunit with a pyruvoyl group at its N-terminus.

It localises to the cytoplasm. The catalysed reaction is L-aspartate + H(+) = beta-alanine + CO2. Its pathway is cofactor biosynthesis; (R)-pantothenate biosynthesis; beta-alanine from L-aspartate: step 1/1. Its function is as follows. Catalyzes the pyruvoyl-dependent decarboxylation of aspartate to produce beta-alanine. This is Aspartate 1-decarboxylase from Burkholderia ambifaria (strain ATCC BAA-244 / DSM 16087 / CCUG 44356 / LMG 19182 / AMMD) (Burkholderia cepacia (strain AMMD)).